Here is a 207-residue protein sequence, read N- to C-terminus: Putative threonylcarbamoyl-AMP synthase (207 aa).

Residues 15 to 199 (EEERKKVLEF…KIISIREGVI (185 aa)) form the YrdC-like domain.

The protein belongs to the SUA5 family.

It localises to the cytoplasm. It carries out the reaction L-threonine + hydrogencarbonate + ATP = L-threonylcarbamoyladenylate + diphosphate + H2O. Its function is as follows. Required for the formation of a threonylcarbamoyl group on adenosine at position 37 (t(6)A37) in tRNAs that read codons beginning with adenine. Catalyzes the conversion of L-threonine, HCO(3)(-)/CO(2) and ATP to give threonylcarbamoyl-AMP (TC-AMP) as the acyladenylate intermediate, with the release of diphosphate. This is Putative threonylcarbamoyl-AMP synthase from Methanocaldococcus jannaschii (strain ATCC 43067 / DSM 2661 / JAL-1 / JCM 10045 / NBRC 100440) (Methanococcus jannaschii).